The sequence spans 461 residues: Vitamin K-dependent protein C (461 aa).

The signal sequence occupies residues 1–18 (MWQLTSLLLFVATWGISG). An O-linked (GalNAc...) threonine glycan is attached at threonine 19. The propeptide occupies 19–42 (TPAPLDSVFSSSERAHQVLRIRKR). A Gla domain is found at 43 to 88 (ANSFLEELRHSSLERECIEEICDFEEAKEIFQNVDDTLAFWSKHVD). Glutamate 48, glutamate 49, glutamate 56, glutamate 58, glutamate 61, glutamate 62, glutamate 67, glutamate 68, and glutamate 71 each carry 4-carboxyglutamate. A disulfide bridge connects residues cysteine 59 and cysteine 64. Intrachain disulfides connect cysteine 92–cysteine 111, cysteine 101–cysteine 106, cysteine 105–cysteine 120, and cysteine 122–cysteine 131. 2 consecutive EGF-like domains span residues 97 to 132 (LEHP…RFCQ) and 136 to 176 (SFLN…LQCH). Aspartate 113 carries the post-translational modification (3R)-3-hydroxyaspartate. A glycan (N-linked (GlcNAc...) asparagine) is linked at asparagine 139. 5 disulfide bridges follow: cysteine 140–cysteine 151, cysteine 147–cysteine 160, cysteine 162–cysteine 175, cysteine 183–cysteine 319, and cysteine 238–cysteine 254. A Peptidase S1 domain is found at 212–450 (LIDGKMTRRG…YLDWIHGHIR (239 aa)). Histidine 253 acts as the Charge relay system in catalysis. An N-linked (GlcNAc...) asparagine glycan is attached at asparagine 290. Aspartate 299 serves as the catalytic Charge relay system. At serine 347 the chain carries Phosphoserine; by FAM20C. N-linked (GlcNAc...) asparagine glycosylation occurs at asparagine 355. Asparagine 371 carries N-linked (GlcNAc...) asparagine; atypical; partial glycosylation. 2 cysteine pairs are disulfide-bonded: cysteine 373-cysteine 387 and cysteine 398-cysteine 426. Serine 402 serves as the catalytic Charge relay system.

The protein belongs to the peptidase S1 family. Synthesized as a single chain precursor, which is cleaved into a light chain and a heavy chain held together by a disulfide bond. The enzyme is then activated by thrombin, which cleaves a tetradecapeptide from the amino end of the heavy chain; this reaction, which occurs at the surface of endothelial cells, is strongly promoted by thrombomodulin. Interacts (activated) with iripin-8, a serine protease inhibitor from Ixodes ricinus saliva. The vitamin K-dependent, enzymatic carboxylation of some Glu residues allows the modified protein to bind calcium. In terms of processing, N- and O-glycosylated. Partial (70%) N-glycosylation of Asn-371 with an atypical N-X-C site produces a higher molecular weight form referred to as alpha. The lower molecular weight form, not N-glycosylated at Asn-371, is beta. O-glycosylated with core 1 or possibly core 8 glycans. Post-translationally, the iron and 2-oxoglutarate dependent 3-hydroxylation of aspartate and asparagine is (R) stereospecific within EGF domains. May be phosphorylated on a Ser or Thr in a region (AA 25-30) of the propeptide. As to expression, plasma; synthesized in the liver.

It localises to the secreted. It is found in the golgi apparatus. The protein resides in the endoplasmic reticulum. The enzyme catalyses Degradation of blood coagulation factors Va and VIIIa.. Protein C is a vitamin K-dependent serine protease that regulates blood coagulation by inactivating factors Va and VIIIa in the presence of calcium ions and phospholipids. Exerts a protective effect on the endothelial cell barrier function. The protein is Vitamin K-dependent protein C (PROC) of Homo sapiens (Human).